Reading from the N-terminus, the 294-residue chain is MLENLSTEHRNEKTMNLDEMSIKEVLQSMNEEDRTVALAVEKEIEQIEKVVQTVIKSFEEEGRLIYIGAGTSGRLGILDAVECPPTFGTDDKMVQGYIAGGLKAFTKAVEGAEDREELAEEDLKSIGLNEKDTVIGIAASGRTPYVIGGLKYAQSVGASTASISCNKNAEISKYAKLNVEVETGAEILTGSTRLKAGTAQKLVLNMISTASMIGVGKVYKNLMVDVQSTNEKLVERSKRIIMEATGASYEVAAEYYEKAERNVKAAIVMVLLQCEYGEALEKLKYAKGFVKKAL.

The SIS domain occupies 54–217; that stretch reads VIKSFEEEGR…STASMIGVGK (164 aa). Glu-82 (proton donor) is an active-site residue. The active site involves Glu-113.

Belongs to the GCKR-like family. MurNAc-6-P etherase subfamily. As to quaternary structure, homodimer.

The catalysed reaction is N-acetyl-D-muramate 6-phosphate + H2O = N-acetyl-D-glucosamine 6-phosphate + (R)-lactate. It participates in amino-sugar metabolism; N-acetylmuramate degradation. Its function is as follows. Specifically catalyzes the cleavage of the D-lactyl ether substituent of MurNAc 6-phosphate, producing GlcNAc 6-phosphate and D-lactate. This is N-acetylmuramic acid 6-phosphate etherase from Bacillus cereus (strain G9842).